A 273-amino-acid chain; its full sequence is Ribosomal RNA small subunit methyltransferase A (273 aa).

Asn18, Leu20, Gly45, Glu66, Asp91, and Asn113 together coordinate S-adenosyl-L-methionine.

It belongs to the class I-like SAM-binding methyltransferase superfamily. rRNA adenine N(6)-methyltransferase family. RsmA subfamily.

Its subcellular location is the cytoplasm. It catalyses the reaction adenosine(1518)/adenosine(1519) in 16S rRNA + 4 S-adenosyl-L-methionine = N(6)-dimethyladenosine(1518)/N(6)-dimethyladenosine(1519) in 16S rRNA + 4 S-adenosyl-L-homocysteine + 4 H(+). Functionally, specifically dimethylates two adjacent adenosines (A1518 and A1519) in the loop of a conserved hairpin near the 3'-end of 16S rRNA in the 30S particle. May play a critical role in biogenesis of 30S subunits. This is Ribosomal RNA small subunit methyltransferase A from Salmonella choleraesuis (strain SC-B67).